Consider the following 189-residue polypeptide: Protein GrpE (189 aa).

Over residues 1–20 (MSDQQHSAPQNAAATASPSD) the composition is skewed to polar residues. Residues 1–29 (MSDQQHSAPQNAAATASPSDSPEAVEATM) are disordered.

Belongs to the GrpE family. Homodimer.

The protein localises to the cytoplasm. Participates actively in the response to hyperosmotic and heat shock by preventing the aggregation of stress-denatured proteins, in association with DnaK and GrpE. It is the nucleotide exchange factor for DnaK and may function as a thermosensor. Unfolded proteins bind initially to DnaJ; upon interaction with the DnaJ-bound protein, DnaK hydrolyzes its bound ATP, resulting in the formation of a stable complex. GrpE releases ADP from DnaK; ATP binding to DnaK triggers the release of the substrate protein, thus completing the reaction cycle. Several rounds of ATP-dependent interactions between DnaJ, DnaK and GrpE are required for fully efficient folding. In Paracidovorax citrulli (strain AAC00-1) (Acidovorax citrulli), this protein is Protein GrpE.